Reading from the N-terminus, the 850-residue chain is Transcription initiation factor TFIID subunit 4B (850 aa).

Positions 99-240 (GTTTIQLPAN…TPSNDARLKA (142 aa)) are sufficient for interaction with ZNF628. Residues 256-353 (ENVKKCKNFL…VKEVSGDVVI (98 aa)) enclose the TAFH domain. The required for interaction with P65/RELA stretch occupies residues 504–526 (PSTLLPQAAGIPQTAKVKQLVVQ). A Nuclear export signal motif is present at residues 509–549 (PQAAGIPQTAKVKQLVVQQPSGSSVNHVTSISHSSPLSTQN). Ser-584 carries the post-translational modification Phosphoserine. Positions 642–691 (PFLVIGALQKRILDIGKKHDITELNSDAVNLISHATQERLRGLLEKLTTI) constitute a Histone-fold domain. Residues 788 to 812 (KRPLESGNESFKDNPSTSGTSSLTA) form a disordered region. Positions 794–812 (GNESFKDNPSTSGTSSLTA) are enriched in polar residues. Residues 818 to 850 (PRITRICLRDLIFCMEQEREMKYSRALYLALLK) are required for interaction with TAF12.

Belongs to the TAF4 family. TFIID is composed of TATA binding protein (TBP) and a number of TBP-associated factors (TAFs). Heterodimerizes with TAF12/TFII20 via the C-terminal H2A-like histone-fold domain. This heterodimer forms a histone-like octamer with the TAF6/TAFII70-TAF9/TAFII31 heterodimer. Interacts with P65/RELA homodimers and P65/RELA-REL heterodimers. Interaction with POU2AF1, via its C-terminal activation domain, is required for octamer-dependent transcription. Interacts with ZNF628. As to expression, highly expressed in the testes and ovary, whereas lower levels are detected in most other tissues.

Its subcellular location is the nucleus. The protein localises to the cytoplasm. Functionally, cell type-specific subunit of the general transcription factor TFIID that may function as a gene-selective coactivator in certain cells. TFIID is a multimeric protein complex that plays a central role in mediating promoter responses to various activators asond repressors. TAF4B is a transcriptional coactivator of the p65/RELA NF-kappa-B subunit. Involved in the activation of a subset of antiapoptotic genes including TNFAIP3. Through interaction with OCBA/POU2AF1, acts as a coactivator of B-cell-specific transcription. Plays a role in spermiogenesis and oogenesis. In Mus musculus (Mouse), this protein is Transcription initiation factor TFIID subunit 4B (Taf4b).